The sequence spans 153 residues: Insulin-like growth factor 1 (153 aa).

Residues 49 to 77 (GPETLCGAELVDALQFVCGPRGFYFNKPT) are b. 3 disulfide bridges follow: C54–C96, C66–C109, and C95–C100. The tract at residues 78 to 89 (GYGSSIRRAPQT) is c. The a stretch occupies residues 90-110 (GIVDECCFRSCDLRRLEMYCA). The tract at residues 111 to 118 (PLKPTKSA) is d. The propeptide at 119 to 153 (RSIRAQRHTDMPKTQKEVHLKNTSRGSAGNKTYRM) is e peptide. Positions 119 to 153 (RSIRAQRHTDMPKTQKEVHLKNTSRGSAGNKTYRM) are disordered. Residues 125–138 (RHTDMPKTQKEVHL) are compositionally biased toward basic and acidic residues. The segment covering 139-153 (KNTSRGSAGNKTYRM) has biased composition (polar residues).

Belongs to the insulin family. As to quaternary structure, forms a ternary complex with IGFR1 and ITGAV:ITGB3. Forms a ternary complex with IGFR1 and ITGA6:ITGB4. Forms a ternary complex with IGFBP3 and ALS.

The protein resides in the secreted. In terms of biological role, the insulin-like growth factors, isolated from plasma, are structurally and functionally related to insulin but have a much higher growth-promoting activity. May be a physiological regulator of [1-14C]-2-deoxy-D-glucose (2DG) transport and glycogen synthesis in osteoblasts. Stimulates glucose transport in bone-derived osteoblastic (PyMS) cells and is effective at much lower concentrations than insulin, not only regarding glycogen and DNA synthesis but also with regard to enhancing glucose uptake. May play a role in synapse maturation. Ca(2+)-dependent exocytosis of IGF1 is required for sensory perception of smell in the olfactory bulb. Acts as a ligand for IGF1R. Binds to the alpha subunit of IGF1R, leading to the activation of the intrinsic tyrosine kinase activity which autophosphorylates tyrosine residues in the beta subunit thus initiating a cascade of down-stream signaling events leading to activation of the PI3K-AKT/PKB and the Ras-MAPK pathways. Binds to integrins ITGAV:ITGB3 and ITGA6:ITGB4. Its binding to integrins and subsequent ternary complex formation with integrins and IGFR1 are essential for IGF1 signaling. Induces the phosphorylation and activation of IGFR1, MAPK3/ERK1, MAPK1/ERK2 and AKT1. As part of the MAPK/ERK signaling pathway, acts as a negative regulator of apoptosis in cardiomyocytes via promotion of STUB1/CHIP-mediated ubiquitination and degradation of ICER-type isoforms of CREM. This Rattus norvegicus (Rat) protein is Insulin-like growth factor 1.